We begin with the raw amino-acid sequence, 466 residues long: Coagulation factor VII (466 aa).

A signal peptide spans Met-1–Ala-20. Positions Ala-21–Arg-60 are excised as a propeptide. The 45-residue stretch at Ala-61 to Ser-105 folds into the Gla domain. A 4-carboxyglutamate mark is found at Glu-66, Glu-67, Glu-74, Glu-76, Glu-79, Glu-80, Glu-85, Glu-86, Glu-89, and Glu-95. Residues Cys-77 and Cys-82 are joined by a disulfide bond. Residues Asp-106–Glu-142 enclose the EGF-like 1; calcium-binding domain. 10 disulfides stabilise this stretch: Cys-110–Cys-121, Cys-115–Cys-130, Cys-132–Cys-141, Cys-151–Cys-162, Cys-158–Cys-172, Cys-174–Cys-187, Cys-195–Cys-322, Cys-219–Cys-224, Cys-238–Cys-254, and Cys-370–Cys-389. Residue Ser-112 is glycosylated (O-linked (Glc...) serine; alternate). Ser-112 is a glycosylation site (O-linked (Xyl...) serine; alternate). Residue Ser-120 is glycosylated (O-linked (Fuc) serine). At Asp-123 the chain carries (3R)-3-hydroxyaspartate. The EGF-like 2 domain occupies Asp-147–Thr-188. Asn-205 carries N-linked (GlcNAc...) asparagine glycosylation. In terms of domain architecture, Peptidase S1 spans Ile-213 to Arg-452. Residues His-253 and Asp-302 each act as charge relay system in the active site. N-linked (GlcNAc...) asparagine glycosylation is present at Asn-382. Asp-398 provides a ligand contact to substrate. The cysteines at positions 400 and 428 are disulfide-linked. Ser-404 functions as the Charge relay system in the catalytic mechanism.

This sequence belongs to the peptidase S1 family. Heterodimer of a light chain and a heavy chain linked by a disulfide bond. Post-translationally, the vitamin K-dependent, enzymatic carboxylation of some glutamate residues allows the modified protein to bind calcium. In terms of processing, the iron and 2-oxoglutarate dependent 3-hydroxylation of aspartate and asparagine is (R) stereospecific within EGF domains. O-glycosylated. O-fucosylated by POFUT1 on a conserved serine or threonine residue found in the consensus sequence C2-X(4,5)-[S/T]-C3 of EGF domains, where C2 and C3 are the second and third conserved cysteines. Post-translationally, can be either O-glucosylated or O-xylosylated at Ser-112 by POGLUT1.

The protein resides in the secreted. The enzyme catalyses Selective cleavage of Arg-|-Ile bond in factor X to form factor Xa.. Functionally, initiates the extrinsic pathway of blood coagulation. Serine protease that circulates in the blood in a zymogen form. Factor VII is converted to factor VIIa by factor Xa, factor XIIa, factor IXa, or thrombin by minor proteolysis. In the presence of tissue factor and calcium ions, factor VIIa then converts factor X to factor Xa by limited proteolysis. Factor VIIa also converts factor IX to factor IXa in the presence of tissue factor and calcium. This Pan paniscus (Pygmy chimpanzee) protein is Coagulation factor VII (F7).